The primary structure comprises 238 residues: Large ribosomal subunit protein bL17m (238 aa).

It belongs to the bacterial ribosomal protein bL17 family. As to quaternary structure, component of the mitochondrial large ribosomal subunit (mt-LSU). Mature yeast 74S mitochondrial ribosomes consist of a small (37S) and a large (54S) subunit. The 37S small subunit contains a 15S ribosomal RNA (15S mt-rRNA) and 34 different proteins. The 54S large subunit contains a 21S rRNA (21S mt-rRNA) and 46 different proteins.

Its subcellular location is the mitochondrion. Its function is as follows. Component of the mitochondrial ribosome (mitoribosome), a dedicated translation machinery responsible for the synthesis of mitochondrial genome-encoded proteins, including at least some of the essential transmembrane subunits of the mitochondrial respiratory chain. The mitoribosomes are attached to the mitochondrial inner membrane and translation products are cotranslationally integrated into the membrane. This is Large ribosomal subunit protein bL17m (MRPL8) from Saccharomyces cerevisiae (strain ATCC 204508 / S288c) (Baker's yeast).